The primary structure comprises 345 residues: ATP-dependent (S)-NAD(P)H-hydrate dehydratase (345 aa).

The region spanning 9 to 332 is the YjeF C-terminal domain; it reads ILSLARSMIP…DMVGEVYEEV (324 aa). (6S)-NADPHX contacts are provided by residues Gly-113 and 170-176; that span reads NVMEFKR. Residues 208–212 and 241–250 contribute to the ATP site; these read KGPSD and GGLKRVGGQG. Asp-251 provides a ligand contact to (6S)-NADPHX.

This sequence belongs to the NnrD/CARKD family. Mg(2+) is required as a cofactor.

Its subcellular location is the cytoplasm. The enzyme catalyses (6S)-NADHX + ATP = ADP + phosphate + NADH + H(+). It carries out the reaction (6S)-NADPHX + ATP = ADP + phosphate + NADPH + H(+). Catalyzes the dehydration of the S-form of NAD(P)HX at the expense of ATP, which is converted to ADP. Together with NAD(P)HX epimerase, which catalyzes the epimerization of the S- and R-forms, the enzyme allows the repair of both epimers of NAD(P)HX, a damaged form of NAD(P)H that is a result of enzymatic or heat-dependent hydration. In Cryptococcus neoformans var. neoformans serotype D (strain JEC21 / ATCC MYA-565) (Filobasidiella neoformans), this protein is ATP-dependent (S)-NAD(P)H-hydrate dehydratase.